The primary structure comprises 277 residues: Inositol monophosphatase 1 (277 aa).

4 residues coordinate Mg(2+): glutamate 70, aspartate 90, isoleucine 92, and aspartate 93. Substrate contacts are provided by residues glutamate 70, 90-95, 194-196, glutamate 213, and aspartate 220; these read DPIDGT and GTA. A Mg(2+)-binding site is contributed by aspartate 220.

It belongs to the inositol monophosphatase superfamily. Homodimer. Requires Mg(2+) as cofactor. Mostly expressed in brain, small intestine, testis, kidney, and spleen (at protein level).

It localises to the cytoplasm. It carries out the reaction a myo-inositol phosphate + H2O = myo-inositol + phosphate. The catalysed reaction is 1D-myo-inositol 1-phosphate + H2O = myo-inositol + phosphate. The enzyme catalyses 1D-myo-inositol 2-phosphate + H2O = myo-inositol + phosphate. It catalyses the reaction 1D-myo-inositol 3-phosphate + H2O = myo-inositol + phosphate. It carries out the reaction 1D-myo-inositol 4-phosphate + H2O = myo-inositol + phosphate. The catalysed reaction is 1D-myo-inositol 5-phosphate + H2O = myo-inositol + phosphate. The enzyme catalyses 1D-myo-inositol 6-phosphate + H2O = myo-inositol + phosphate. It catalyses the reaction scyllo-inositol 1-phosphate + H2O = scyllo-inositol + phosphate. It carries out the reaction alpha-D-galactose 1-phosphate + H2O = D-galactose + phosphate. The catalysed reaction is alpha-D-glucose 1-phosphate + H2O = D-glucose + phosphate. The enzyme catalyses D-glucose 6-phosphate + H2O = D-glucose + phosphate. It catalyses the reaction beta-D-fructose 1-phosphate + H2O = D-fructose + phosphate. It carries out the reaction glycerol 2-phosphate + H2O = glycerol + phosphate. The catalysed reaction is adenosine 2'-phosphate + H2O = adenosine + phosphate. It functions in the pathway polyol metabolism; myo-inositol biosynthesis; myo-inositol from D-glucose 6-phosphate: step 2/2. Its activity is regulated as follows. Inhibited by Li(+), Ca(2+) and Mn(2+), but also by Mg(2+) at concentrations above 3 mM. In terms of biological role, phosphatase involved in the dephosphorylation of myo-inositol monophosphate to generate myo-inositol. Is also able to dephosphorylate scyllo-inositol-phosphate, myo-inositol 1,4-diphosphate, scyllo-inositol-1,3-diphosphate and scyllo-inositol-1,4-diphosphate. Also dephosphorylates in vitro other sugar-phosphates including D-galactose-1-phosphate, glucose-1-phosphate, glucose-6-phosphate, fructose-1-phosphate, beta-glycerophosphate and 2'-AMP. Responsible for the provision of inositol required for synthesis of phosphatidylinositol and polyphosphoinositides, and involved in maintaining normal brain function. Has been implicated as the pharmacological target for lithium Li(+) action in brain. This is Inositol monophosphatase 1 (Impa1) from Mus musculus (Mouse).